The following is a 436-amino-acid chain: p-aminobenzoyl-glutamate hydrolase subunit A (436 aa).

The protein belongs to the peptidase M20 family. In terms of assembly, forms a heterodimer with AbgB. Requires Mn(2+) as cofactor.

Its function is as follows. Component of the p-aminobenzoyl-glutamate hydrolase multicomponent enzyme system which catalyzes the cleavage of p-aminobenzoyl-glutamate (PABA-GLU) to form p-aminobenzoate (PABA) and glutamate. AbgAB does not degrade dipeptides and the physiological role of abgABT should be clarified. This is p-aminobenzoyl-glutamate hydrolase subunit A (abgA) from Escherichia coli (strain K12).